Consider the following 91-residue polypeptide: Probable Fe(2+)-trafficking protein (91 aa).

The protein belongs to the Fe(2+)-trafficking protein family. Monomer.

Functionally, could be a mediator in iron transactions between iron acquisition and iron-requiring processes, such as synthesis and/or repair of Fe-S clusters in biosynthetic enzymes. This is Probable Fe(2+)-trafficking protein from Escherichia coli O7:K1 (strain IAI39 / ExPEC).